A 277-amino-acid polypeptide reads, in one-letter code: Venom serine protease (277 aa).

The N-terminal stretch at 1-19 (MNCGKIILLFITIIGVAKS) is a signal peptide. One can recognise a Peptidase S1 domain in the interval 34–269 (IVNGVETEIN…FMEFIHNATI (236 aa)). A disulfide bond links cysteine 60 and cysteine 76. The active-site Charge relay system is the histidine 75. Asparagine 84 and asparagine 104 each carry an N-linked (GlcNAc...) asparagine glycan. Aspartate 126 acts as the Charge relay system in catalysis. 2 N-linked (GlcNAc...) asparagine glycosylation sites follow: asparagine 155 and asparagine 158. 2 cysteine pairs are disulfide-bonded: cysteine 192–cysteine 207 and cysteine 216–cysteine 246. N-linked (GlcNAc...) asparagine glycosylation is present at asparagine 218. The active-site Charge relay system is serine 220. A glycan (N-linked (GlcNAc...) asparagine) is linked at asparagine 266.

The protein belongs to the peptidase S1 family. Expressed by the venom duct.

The protein resides in the secreted. The protein is Venom serine protease of Polistes dominula (European paper wasp).